The chain runs to 215 residues: Pyridoxine/pyridoxamine 5'-phosphate oxidase (215 aa).

Substrate contacts are provided by residues 11 to 14 (RRDY) and Lys-69. FMN contacts are provided by residues 64-69 (RVVLLK), 79-80 (YT), Lys-86, and Gln-108. 3 residues coordinate substrate: Tyr-126, Arg-130, and Ser-134. FMN-binding positions include 143-144 (QS) and Trp-188. 194–196 (RLH) serves as a coordination point for substrate. Arg-198 provides a ligand contact to FMN.

This sequence belongs to the pyridoxamine 5'-phosphate oxidase family. In terms of assembly, homodimer. The cofactor is FMN.

It catalyses the reaction pyridoxamine 5'-phosphate + O2 + H2O = pyridoxal 5'-phosphate + H2O2 + NH4(+). The enzyme catalyses pyridoxine 5'-phosphate + O2 = pyridoxal 5'-phosphate + H2O2. It participates in cofactor metabolism; pyridoxal 5'-phosphate salvage; pyridoxal 5'-phosphate from pyridoxamine 5'-phosphate: step 1/1. It functions in the pathway cofactor metabolism; pyridoxal 5'-phosphate salvage; pyridoxal 5'-phosphate from pyridoxine 5'-phosphate: step 1/1. Catalyzes the oxidation of either pyridoxine 5'-phosphate (PNP) or pyridoxamine 5'-phosphate (PMP) into pyridoxal 5'-phosphate (PLP). This is Pyridoxine/pyridoxamine 5'-phosphate oxidase from Legionella pneumophila (strain Paris).